A 761-amino-acid polypeptide reads, in one-letter code: Ribonucleoside-diphosphate reductase subunit alpha (761 aa).

The ATP-cone domain maps to 5–95 (LFVTKRDGRK…IFHLRKKAYG (91 aa)). ATP-binding positions include K9, 15-21 (EKINLDK), T55, and K91. A GDP-binding site is contributed by T209. Cysteines 225 and 462 form a disulfide. DTTP-binding positions include 232 to 234 (DSL), R262, and R269. N437 provides a ligand contact to GDP. N437 functions as the Proton acceptor in the catalytic mechanism. Catalysis depends on C439, which acts as the Cysteine radical intermediate. GDP is bound by residues E441 and 623–625 (ETS). Catalysis depends on E441, which acts as the Proton acceptor.

This sequence belongs to the ribonucleoside diphosphate reductase large chain family. As to quaternary structure, tetramer of two alpha and two beta subunits.

It carries out the reaction a 2'-deoxyribonucleoside 5'-diphosphate + [thioredoxin]-disulfide + H2O = a ribonucleoside 5'-diphosphate + [thioredoxin]-dithiol. With respect to regulation, under complex allosteric control mediated by deoxynucleoside triphosphates and ATP binding to separate specificity and activation sites on the alpha subunit. The type of nucleotide bound at the specificity site determines substrate preference. It seems probable that ATP makes the enzyme reduce CDP and UDP, dGTP favors ADP reduction and dTTP favors GDP reduction. Stimulated by ATP and inhibited by dATP binding to the activity site. Provides the precursors necessary for DNA synthesis. Catalyzes the biosynthesis of deoxyribonucleotides from the corresponding ribonucleotides. The polypeptide is Ribonucleoside-diphosphate reductase subunit alpha (nrdA) (Buchnera aphidicola subsp. Acyrthosiphon pisum (strain APS) (Acyrthosiphon pisum symbiotic bacterium)).